A 137-amino-acid polypeptide reads, in one-letter code: ATP synthase epsilon chain (137 aa).

It belongs to the ATPase epsilon chain family. In terms of assembly, F-type ATPases have 2 components, CF(1) - the catalytic core - and CF(0) - the membrane proton channel. CF(1) has five subunits: alpha(3), beta(3), gamma(1), delta(1), epsilon(1). CF(0) has three main subunits: a, b and c.

Its subcellular location is the cell inner membrane. Produces ATP from ADP in the presence of a proton gradient across the membrane. The protein is ATP synthase epsilon chain of Pseudoalteromonas atlantica (strain T6c / ATCC BAA-1087).